The following is a 137-amino-acid chain: Phosphoribosyl-AMP cyclohydrolase (137 aa).

Asp84 is a binding site for Mg(2+). Cys85 provides a ligand contact to Zn(2+). Mg(2+)-binding residues include Asp86 and Asp88. Residues Cys101 and Cys108 each contribute to the Zn(2+) site.

Belongs to the PRA-CH family. As to quaternary structure, homodimer. Mg(2+) serves as cofactor. The cofactor is Zn(2+).

The protein localises to the cytoplasm. The catalysed reaction is 1-(5-phospho-beta-D-ribosyl)-5'-AMP + H2O = 1-(5-phospho-beta-D-ribosyl)-5-[(5-phospho-beta-D-ribosylamino)methylideneamino]imidazole-4-carboxamide. The protein operates within amino-acid biosynthesis; L-histidine biosynthesis; L-histidine from 5-phospho-alpha-D-ribose 1-diphosphate: step 3/9. Catalyzes the hydrolysis of the adenine ring of phosphoribosyl-AMP. This chain is Phosphoribosyl-AMP cyclohydrolase, found in Pelodictyon phaeoclathratiforme (strain DSM 5477 / BU-1).